A 138-amino-acid polypeptide reads, in one-letter code: Holo-[acyl-carrier-protein] synthase (138 aa).

Asp-8 and Glu-56 together coordinate Mg(2+).

It belongs to the P-Pant transferase superfamily. AcpS family. The cofactor is Mg(2+).

The protein resides in the cytoplasm. It carries out the reaction apo-[ACP] + CoA = holo-[ACP] + adenosine 3',5'-bisphosphate + H(+). Functionally, transfers the 4'-phosphopantetheine moiety from coenzyme A to a Ser of acyl-carrier-protein. The sequence is that of Holo-[acyl-carrier-protein] synthase from Thermoanaerobacter pseudethanolicus (strain ATCC 33223 / 39E) (Clostridium thermohydrosulfuricum).